Consider the following 262-residue polypeptide: Flap endonuclease Xni (262 aa).

D112 is a binding site for Mg(2+). One can recognise a 5'-3' exonuclease domain in the interval 171–258 (QQLNDYWAIT…GFNLKDLRYT (88 aa)). 3 residues coordinate K(+): I179, V190, and I193. The interaction with DNA stretch occupies residues 192–197 (GIGSKG).

The protein belongs to the Xni family. Mg(2+) serves as cofactor. It depends on K(+) as a cofactor.

Has flap endonuclease activity. During DNA replication, flap endonucleases cleave the 5'-overhanging flap structure that is generated by displacement synthesis when DNA polymerase encounters the 5'-end of a downstream Okazaki fragment. This Psychromonas ingrahamii (strain DSM 17664 / CCUG 51855 / 37) protein is Flap endonuclease Xni.